The chain runs to 142 residues: Large ribosomal subunit protein uL13 (142 aa).

The protein belongs to the universal ribosomal protein uL13 family. In terms of assembly, part of the 50S ribosomal subunit.

Functionally, this protein is one of the early assembly proteins of the 50S ribosomal subunit, although it is not seen to bind rRNA by itself. It is important during the early stages of 50S assembly. In Burkholderia cenocepacia (strain ATCC BAA-245 / DSM 16553 / LMG 16656 / NCTC 13227 / J2315 / CF5610) (Burkholderia cepacia (strain J2315)), this protein is Large ribosomal subunit protein uL13.